A 93-amino-acid chain; its full sequence is Small ribosomal subunit protein bS16 (93 aa).

The protein belongs to the bacterial ribosomal protein bS16 family.

This is Small ribosomal subunit protein bS16 from Dictyoglomus thermophilum (strain ATCC 35947 / DSM 3960 / H-6-12).